Consider the following 295-residue polypeptide: MEDIPDTSRPPLKYVKGIPLIKYFAEALESLQDFQAQPDDLLISTYPKSGTTWVSEILDMIYQDGDVEKCRRAPVFIRVPFLEFKAPGIPTGLEVLKDTPAPRLIKTHLPLALLPQTLLDQKVKVVYVARNAKDVAVSYYHFYRMAKVHPDPDTWDSFLEKFMAGEVSYGSWYQHVQEWWELSHTHPVLYLFYEDMKENPKREIQKILKFVGRSLPEETVDLIVQHTSFKEMKNNSMANYTTLSPDIMDHSISAFMRKGISGDWKTTFTVAQNERFDADYAKKMEGCGLSFRTQL.

Lys48–Trp53 contributes to the 3'-phosphoadenylyl sulfate binding site. Lys106–His108 serves as a coordination point for substrate. The active-site Proton acceptor is His108. 3'-phosphoadenylyl sulfate contacts are provided by residues Arg130, Ser138, Tyr193, Thr227–Met232, and Phe255–Gly259. Ser138 is modified (phosphoserine).

Belongs to the sulfotransferase 1 family. In terms of assembly, homodimer. Ubiquitously expressed in canine tissues with highest expression in male and female liver.

It is found in the cytoplasm. The catalysed reaction is a phenol + 3'-phosphoadenylyl sulfate = an aryl sulfate + adenosine 3',5'-bisphosphate + H(+). It catalyses the reaction 17beta-estradiol + 3'-phosphoadenylyl sulfate = 17beta-estradiol 3-sulfate + adenosine 3',5'-bisphosphate + H(+). The enzyme catalyses 4-ethylphenol + 3'-phosphoadenylyl sulfate = 4-ethylphenyl sulfate + adenosine 3',5'-bisphosphate + H(+). It carries out the reaction 4-nitrophenol + 3'-phosphoadenylyl sulfate = 4-nitrophenyl sulfate + adenosine 3',5'-bisphosphate. The catalysed reaction is dopamine + 3'-phosphoadenylyl sulfate = dopamine 3-O-sulfate + adenosine 3',5'-bisphosphate + H(+). It catalyses the reaction dopamine + 3'-phosphoadenylyl sulfate = dopamine 4-O-sulfate + adenosine 3',5'-bisphosphate + H(+). The enzyme catalyses 3,3',5-triiodo-L-thyronine + 3'-phosphoadenylyl sulfate = 3,3',5-triiodo-L-thyronine sulfate + adenosine 3',5'-bisphosphate + H(+). It carries out the reaction 3,3',5'-triiodo-L-thyronine + 3'-phosphoadenylyl sulfate = 3,3',5'-triiodo-L-thyronine sulfate + adenosine 3',5'-bisphosphate + H(+). The catalysed reaction is 3,3'-diiodo-L-thyronine + 3'-phosphoadenylyl sulfate = 3,3'-diiodo-L-thyronine sulfate + adenosine 3',5'-bisphosphate + H(+). It catalyses the reaction L-thyroxine + 3'-phosphoadenylyl sulfate = L-thyroxine sulfate + adenosine 3',5'-bisphosphate + H(+). Sulfotransferase that utilizes 3'-phospho-5'-adenylyl sulfate (PAPS) as sulfonate donor to catalyze the sulfate conjugation of a wide variety of acceptor molecules bearing a hydroxyl or an amine group. Sulfonation increases the water solubility of most compounds, and therefore their renal excretion, but it can also result in bioactivation to form active metabolites. Displays broad substrate specificity for small phenolic compounds. Plays an important role in the sulfonation of endogenous molecules such as steroid hormones. Mediates also the metabolic activation of carcinogenic N-hydroxyarylamines leading to highly reactive intermediates capable of forming DNA adducts, potentially resulting in mutagenesis. May play a role in gut microbiota-host metabolic interaction. O-sulfonates 4-ethylphenol (4-EP), a dietary tyrosine-derived metabolite produced by gut bacteria. The product 4-EPS crosses the blood-brain barrier and may negatively regulate oligodendrocyte maturation and myelination, affecting the functional connectivity of different brain regions associated with the limbic system. Catalyzes the sulfate conjugation of dopamine. Catalyzes the sulfation of T4 (L-thyroxine/3,5,3',5'-tetraiodothyronine), T3 (3,5,3'-triiodothyronine), rT3 (3,3',5'-triiodothyronine) and 3,3'-T2 (3,3'-diiodothyronine), with a substrate preference of 3,3'-T2 &gt; rT3 &gt; T3 &gt; T4. The polypeptide is Sulfotransferase 1A1 (SULT1A1) (Canis lupus familiaris (Dog)).